The sequence spans 289 residues: LBH domain-containing protein 1 (289 aa).

2 disordered regions span residues 1–36 (MALVPGRSKEDGLWTRNSPGSSQHPESPRLPNPLWD) and 205–289 (EGAE…ASQD). The LBH domain maps to 1-128 (MALVPGRSKE…AEAFFQDQSE (128 aa)). The span at 15 to 25 (TRNSPGSSQHP) shows a compositional bias: polar residues.

In terms of tissue distribution, expressed in bladder cancer tissues (at protein level).

This Homo sapiens (Human) protein is LBH domain-containing protein 1.